The primary structure comprises 235 residues: Thiamine-phosphate synthase (235 aa).

4-amino-2-methyl-5-(diphosphooxymethyl)pyrimidine is bound by residues Gln-50 to Lys-54 and Asn-91. Mg(2+) is bound by residues Asp-92 and Asp-111. Ser-130 provides a ligand contact to 4-amino-2-methyl-5-(diphosphooxymethyl)pyrimidine. Thr-160–Thr-162 is a binding site for 2-[(2R,5Z)-2-carboxy-4-methylthiazol-5(2H)-ylidene]ethyl phosphate. Residue Lys-163 coordinates 4-amino-2-methyl-5-(diphosphooxymethyl)pyrimidine. Gly-191 lines the 2-[(2R,5Z)-2-carboxy-4-methylthiazol-5(2H)-ylidene]ethyl phosphate pocket.

The protein belongs to the thiamine-phosphate synthase family. Mg(2+) is required as a cofactor.

The catalysed reaction is 2-[(2R,5Z)-2-carboxy-4-methylthiazol-5(2H)-ylidene]ethyl phosphate + 4-amino-2-methyl-5-(diphosphooxymethyl)pyrimidine + 2 H(+) = thiamine phosphate + CO2 + diphosphate. The enzyme catalyses 2-(2-carboxy-4-methylthiazol-5-yl)ethyl phosphate + 4-amino-2-methyl-5-(diphosphooxymethyl)pyrimidine + 2 H(+) = thiamine phosphate + CO2 + diphosphate. It carries out the reaction 4-methyl-5-(2-phosphooxyethyl)-thiazole + 4-amino-2-methyl-5-(diphosphooxymethyl)pyrimidine + H(+) = thiamine phosphate + diphosphate. It participates in cofactor biosynthesis; thiamine diphosphate biosynthesis; thiamine phosphate from 4-amino-2-methyl-5-diphosphomethylpyrimidine and 4-methyl-5-(2-phosphoethyl)-thiazole: step 1/1. Functionally, condenses 4-methyl-5-(beta-hydroxyethyl)thiazole monophosphate (THZ-P) and 2-methyl-4-amino-5-hydroxymethyl pyrimidine pyrophosphate (HMP-PP) to form thiamine monophosphate (TMP). In Mycobacterium leprae (strain TN), this protein is Thiamine-phosphate synthase.